The sequence spans 2531 residues: Putative neurobeachin homolog (2531 aa).

Composition is skewed to acidic residues over residues 1–10 (MDISETEYND), 26–35 (EDEVNDEESN), and 62–74 (EPSDDQQNVEESE). Disordered stretches follow at residues 1 to 101 (MDIS…SPPP), 1363 to 1398 (NDGDHASIKNGSDHSENGADEETEEKGEQGQGDNGG), 1420 to 1440 (EELKKMHQSNGRRPSTLMPPQ), and 1642 to 1670 (RFVPNPYGSRHEEANLPEGEKNEEPEISE). Basic and acidic residues predominate over residues 1363–1379 (NDGDHASIKNGSDHSEN). The segment covering 1427–1440 (QSNGRRPSTLMPPQ) has biased composition (polar residues). Residues 1650-1670 (SRHEEANLPEGEKNEEPEISE) show a composition bias toward basic and acidic residues. One can recognise a BEACH-type PH domain in the interval 1714 to 1822 (PSSQSACFST…TVRKVVYQLP (109 aa)). The BEACH domain maps to 1841 to 2130 (MTPRQLFKHS…QLLAEAHPPR (290 aa)). WD repeat units lie at residues 2289–2332 (GHGD…GFIA), 2350–2389 (GHEASISALCVSAEHGLVVSGCEDGVILIHTTASDLLRRI), 2429–2468 (LSEEKIECVTVTRDGEFAVTGAVNGRITIWRMFPLNKLYT), and 2471–2510 (PLNSAVRSVAVVASHRFILGGLDSGAIVVFNADFNRWHYE).

It belongs to the WD repeat neurobeachin family. As to quaternary structure, interacts with RII subunit of PKA.

The protein resides in the cytoplasm. Its subcellular location is the membrane. It is found in the nucleus. Binds to type II regulatory subunits of protein kinase A and anchors/targets them to the membrane. May anchor the kinase to cytoskeletal and/or organelle-associated proteins. Regulates endosomal traffic in polarized epithelial cells such as the vulval precursor cells and intestinal cells. Thought to act as a negative regulator of lin-12 activity in vulval precursor cells. May have a role in the internalization process from basolateral surface of polarized epithelial cells. The protein is Putative neurobeachin homolog of Caenorhabditis briggsae.